The sequence spans 378 residues: Chaperone protein DnaJ (378 aa).

The J domain occupies 5 to 72; sequence DFYEVLGVPK…QKRAAYDQFG (68 aa). The CR-type zinc finger occupies 138–216; the sequence is GKEAQIRIPS…CHGQGKVKKQ (79 aa). C151, C154, C168, C171, C190, C193, C204, and C207 together coordinate Zn(2+). 4 CXXCXGXG motif repeats span residues 151–158, 168–175, 190–197, and 204–211; these read CETCHGSG, CTTCSGTG, CPHCRGTG, and CVTCHGQG. The interval 354-378 is disordered; the sequence is SLKKGGGKHSPSGESWTDRLKNLFT. Positions 369-378 are enriched in basic and acidic residues; the sequence is WTDRLKNLFT.

This sequence belongs to the DnaJ family. Homodimer. Requires Zn(2+) as cofactor.

The protein resides in the cytoplasm. Its function is as follows. Participates actively in the response to hyperosmotic and heat shock by preventing the aggregation of stress-denatured proteins and by disaggregating proteins, also in an autonomous, DnaK-independent fashion. Unfolded proteins bind initially to DnaJ; upon interaction with the DnaJ-bound protein, DnaK hydrolyzes its bound ATP, resulting in the formation of a stable complex. GrpE releases ADP from DnaK; ATP binding to DnaK triggers the release of the substrate protein, thus completing the reaction cycle. Several rounds of ATP-dependent interactions between DnaJ, DnaK and GrpE are required for fully efficient folding. Also involved, together with DnaK and GrpE, in the DNA replication of plasmids through activation of initiation proteins. This Paracidovorax citrulli (strain AAC00-1) (Acidovorax citrulli) protein is Chaperone protein DnaJ.